A 680-amino-acid chain; its full sequence is Pescadillo homolog (680 aa).

Residues 315-336 (GEDEKPKAITNGEGESETPTDA) form a disordered region. Residues 359–471 (DPSQLFANCT…ELKEPNQYAP (113 aa)) enclose the BRCT domain. The interval 494-680 (VPLEEQQTEA…ERKMAKGKAT (187 aa)) is disordered. Composition is skewed to acidic residues over residues 511 to 530 (DVED…DDEA), 543 to 556 (GSDD…EEAD), and 565 to 576 (AEVDDASEDDEQ). Basic and acidic residues-rich tracts occupy residues 597–610 (KASE…DPKS), 617–635 (RKEL…ERAK), and 654–664 (NKKDAESEKLR). Residues 609-680 (KSKAKQQKRK…ERKMAKGKAT (72 aa)) are a coiled coil. The span at 665 to 680 (EKRRRIERKMAKGKAT) shows a compositional bias: basic residues.

This sequence belongs to the pescadillo family. Component of the NOP7 complex, composed of ERB1, NOP7 and YTM1. The complex is held together by ERB1, which interacts with NOP7 via its N-terminal domain and with YTM1 via a high-affinity interaction between the seven-bladed beta-propeller domains of the 2 proteins. The NOP7 complex associates with the 66S pre-ribosome.

The protein resides in the nucleus. Its subcellular location is the nucleolus. It is found in the nucleoplasm. Functionally, component of the NOP7 complex, which is required for maturation of the 25S and 5.8S ribosomal RNAs and formation of the 60S ribosome. This Pyricularia oryzae (strain 70-15 / ATCC MYA-4617 / FGSC 8958) (Rice blast fungus) protein is Pescadillo homolog.